We begin with the raw amino-acid sequence, 94 residues long: Co-chaperonin GroES (94 aa).

Belongs to the GroES chaperonin family. Heptamer of 7 subunits arranged in a ring. Interacts with the chaperonin GroEL.

The protein localises to the cytoplasm. Together with the chaperonin GroEL, plays an essential role in assisting protein folding. The GroEL-GroES system forms a nano-cage that allows encapsulation of the non-native substrate proteins and provides a physical environment optimized to promote and accelerate protein folding. GroES binds to the apical surface of the GroEL ring, thereby capping the opening of the GroEL channel. The protein is Co-chaperonin GroES of Ehrlichia chaffeensis.